The chain runs to 142 residues: Large ribosomal subunit protein uL13 (142 aa).

This sequence belongs to the universal ribosomal protein uL13 family. In terms of assembly, part of the 50S ribosomal subunit.

Functionally, this protein is one of the early assembly proteins of the 50S ribosomal subunit, although it is not seen to bind rRNA by itself. It is important during the early stages of 50S assembly. The polypeptide is Large ribosomal subunit protein uL13 (Yersinia pseudotuberculosis serotype O:1b (strain IP 31758)).